A 306-amino-acid chain; its full sequence is Ribonuclease Z (306 aa).

Zn(2+) contacts are provided by histidine 61, histidine 63, aspartate 65, histidine 66, histidine 137, aspartate 207, and histidine 263. Residue aspartate 65 is the Proton acceptor of the active site.

The protein belongs to the RNase Z family. Homodimer. Zn(2+) is required as a cofactor.

It carries out the reaction Endonucleolytic cleavage of RNA, removing extra 3' nucleotides from tRNA precursor, generating 3' termini of tRNAs. A 3'-hydroxy group is left at the tRNA terminus and a 5'-phosphoryl group is left at the trailer molecule.. In terms of biological role, zinc phosphodiesterase, which displays some tRNA 3'-processing endonuclease activity. Probably involved in tRNA maturation, by removing a 3'-trailer from precursor tRNA. This Thermococcus sibiricus (strain DSM 12597 / MM 739) protein is Ribonuclease Z.